Here is a 339-residue protein sequence, read N- to C-terminus: Annexin A2 (339 aa).

Serine 2 is subject to N-acetylserine. The segment at 2-24 (STVHEILCKLSLEGDHSTPASAY) is S100A10-binding site. Residue tyrosine 24 is modified to Phosphotyrosine; by SRC. Phosphoserine; by PKC is present on serine 26. Annexin repeat units follow at residues 33–104 (FDAE…GLLK) and 105–176 (TPAQ…ALAK). Lysine 49 carries the post-translational modification N6-acetyllysine; alternate. Residue lysine 49 forms a Glycyl lysine isopeptide (Lys-Gly) (interchain with G-Cter in SUMO1); alternate linkage. Residue lysine 49 forms a Glycyl lysine isopeptide (Lys-Gly) (interchain with G-Cter in SUMO2); alternate linkage. An N6-acetyllysine modification is found at lysine 152. Residue serine 184 is modified to Phosphoserine. Annexin repeat units follow at residues 189 to 261 (ELID…NLVQ) and 265 to 336 (NKPL…YLCG). Position 199 is a phosphotyrosine (tyrosine 199). Lysine 227 bears the N6-acetyllysine mark.

Belongs to the annexin family. Heterotetramer containing 2 light chains of S100A10/p11 and 2 heavy chains of ANXA2/p36. Interacts with ATP1B1. Interacts with DYSF. Interacts with COCH. Interacts (via repeat Annexin 1) with PCSK9 (via the C-terminal domain); the interaction inhibits the degradation of LDLR. Interacts with CEACAM1 (via the cytoplasmic domain); this interaction is regulated by phosphorylation of CEACAM1. Interacts with APPL2 and APPL1; targets APPL2 to endosomes and acting in parallel to RAB5A. Interacts with S100A4. May interact with UBAP2. Interacts with PLEKHG4B; this interaction is required for PLEKHG4B localization to cell-cell adhesions. As to quaternary structure, (Microbial infection) Interacts with classical swine fever virus envelope glycoprotein E2. Post-translationally, ISGylated.

It localises to the secreted. The protein localises to the extracellular space. The protein resides in the extracellular matrix. Its subcellular location is the basement membrane. It is found in the melanosome. Functionally, calcium-regulated membrane-binding protein whose affinity for calcium is greatly enhanced by anionic phospholipids. It binds two calcium ions with high affinity. May be involved in heat-stress response. Inhibits PCSK9-enhanced LDLR degradation, probably reduces PCSK9 protein levels via a translational mechanism but also competes with LDLR for binding with PCSK9. Binds to endosomes damaged by phagocytosis of particulate wear debris and participates in endosomal membrane stabilization, thereby limiting NLRP3 inflammasome activation. Required for endothelial cell surface plasmin generation and may support fibrinolytic surveillance and neoangiogenesis. In terms of biological role, (Microbial infection) May serve as a receptor for classical swine fever virus (CSFV). Promotes CSFV infection. The protein is Annexin A2 (ANXA2) of Sus scrofa (Pig).